The following is a 224-amino-acid chain: Artemin (224 aa).

Residues 1-39 (MELGLGEPTALSHCLRPRWQPALWPTLAALALLSSVTEA) form the signal peptide. Positions 40-111 (SLDPMSRSPA…AALRGARAAR (72 aa)) are excised as a propeptide. Positions 41–124 (LDPMSRSPAS…RSSRARATDA (84 aa)) are disordered. The segment covering 80–95 (RPPPQSPQPAPPPPGP) has biased composition (pro residues). Low complexity predominate over residues 96–116 (ALQSPPAALRGARAARAGTRS). Intrachain disulfides connect Cys-127/Cys-192, Cys-154/Cys-220, and Cys-158/Cys-222. N-linked (GlcNAc...) asparagine glycosylation occurs at Asn-206.

Belongs to the TGF-beta family. GDNF subfamily. Homodimer; disulfide-linked. Interacts with GFRA3 coreceptor and RET: forms a 2:2:2 ternary complex composed of ARTN ligand, GFRA3 and RET receptor. As to expression, cochlea. Expressed at higher level in sesorineural epithelium than in the modiolus region or substantia nigra.

It is found in the secreted. Growth factor that supports the survival of sensory and sympathetic peripheral neurons in culture and also supports the survival of dopaminergic neurons of the ventral mid-brain. Acts by binding to its coreceptor, GFRA3, leading to autophosphorylation and activation of the RET receptor. Strong attractant of gut hematopoietic cells thus promoting the formation Peyer's patch-like structures, a major component of the gut-associated lymphoid tissue. This is Artemin (Artn) from Rattus norvegicus (Rat).